The primary structure comprises 342 residues: Isopentenyl-diphosphate delta-isomerase (342 aa).

11 to 12 contributes to the substrate binding site; the sequence is RK. FMN contacts are provided by residues S68, 69-71, S99, and N128; that span reads SMT. 99–101 lines the substrate pocket; the sequence is SQR. Residue Q162 coordinates substrate. E163 provides a ligand contact to Mg(2+). FMN-binding positions include K194, S219, T224, 275–277, and 296–297; these read GVR and AK.

It belongs to the IPP isomerase type 2 family. As to quaternary structure, homooctamer. Dimer of tetramers. It depends on FMN as a cofactor. Requires NADPH as cofactor. Mg(2+) is required as a cofactor.

It is found in the cytoplasm. The enzyme catalyses isopentenyl diphosphate = dimethylallyl diphosphate. Its function is as follows. Involved in the biosynthesis of isoprenoids. Catalyzes the 1,3-allylic rearrangement of the homoallylic substrate isopentenyl (IPP) to its allylic isomer, dimethylallyl diphosphate (DMAPP). The chain is Isopentenyl-diphosphate delta-isomerase from Legionella pneumophila (strain Paris).